The primary structure comprises 101 residues: Large ribosomal subunit protein bL21 (101 aa).

Belongs to the bacterial ribosomal protein bL21 family. Part of the 50S ribosomal subunit. Contacts protein L20.

Its function is as follows. This protein binds to 23S rRNA in the presence of protein L20. The sequence is that of Large ribosomal subunit protein bL21 from Thermus thermophilus (strain ATCC BAA-163 / DSM 7039 / HB27).